A 610-amino-acid polypeptide reads, in one-letter code: Granule-bound starch synthase 1, chloroplastic/amyloplastic (610 aa).

The N-terminal 79 residues, 1 to 79 (MATVTASSNF…SKVKTAGKIV (79 aa)), are a transit peptide targeting the chloroplast. An ADP-alpha-D-glucose-binding site is contributed by lysine 98. A coiled-coil region spans residues 438–454 (TGKKKMEAQILELEEKF).

Belongs to the glycosyltransferase 1 family. Bacterial/plant glycogen synthase subfamily. Interacts with PTST. This interaction is critical for the localization to starch granules. In terms of tissue distribution, expressed in roots, inflorescences, flowers, fruits and at much higher levels in leaves.

It is found in the plastid. The protein resides in the chloroplast. It catalyses the reaction an NDP-alpha-D-glucose + [(1-&gt;4)-alpha-D-glucosyl](n) = [(1-&gt;4)-alpha-D-glucosyl](n+1) + a ribonucleoside 5'-diphosphate + H(+). The protein operates within glycan biosynthesis; starch biosynthesis. In terms of biological role, required for the synthesis of amylose. Destroyed as it is released from the starch granules during the night. The circadian expression is controlled by CCA1 and LHY transcription factors. The sequence is that of Granule-bound starch synthase 1, chloroplastic/amyloplastic from Arabidopsis thaliana (Mouse-ear cress).